A 128-amino-acid polypeptide reads, in one-letter code: CD59 glycoprotein (128 aa).

An N-terminal signal peptide occupies residues 1-25 (MGIQGGSVLFGLLLVLAVFCHSGHS). Residues 26-108 (LQCYNCPNPT…QLENGGTSLS (83 aa)) form the UPAR/Ly6 domain. 3 cysteine pairs are disulfide-bonded: C28/C51, C31/C38, and C44/C64. The N-linked (GlcNAc...) asparagine glycan is linked to N43. N-linked (Glc) (glycation) lysine glycosylation is present at K66. Intrachain disulfides connect C70-C88 and C89-C94. O-linked (GalNAc...) threonine glycosylation is found at T76 and T77. A lipid anchor (GPI-anchor amidated asparagine) is attached at N102. Positions 103 to 128 (GGTSLSEKTVLLLVTPFLAAAWSLHP) are cleaved as a propeptide — removed in mature form.

As to quaternary structure, interacts with T-cell surface antigen CD2. In terms of processing, N- and O-glycosylated. The N-glycosylation mainly consists of a family of biantennary complex-type structures with and without lactosamine extensions and outer arm fucose residues. Also significant amounts of triantennary complexes (22%). Variable sialylation also present in the Asn-43 oligosaccharide. The predominant O-glycans are mono-sialylated forms of the disaccharide, Gal-beta-1,3GalNAc, and their sites of attachment are probably on Thr-76 and Thr-77. The GPI-anchor of soluble urinary CD59 has no inositol-associated phospholipid, but is composed of seven different GPI-anchor variants of one or more monosaccharide units. Major variants contain sialic acid, mannose and glucosamine. Sialic acid linked to an N-acetylhexosamine-galactose arm is present in two variants. Glycated. Glycation is found in diabetic subjects, but only at minimal levels in nondiabetic subjects. Glycated CD59 lacks MAC-inhibitory function and confers to vascular complications of diabetes.

Its subcellular location is the cell membrane. The protein localises to the secreted. Its function is as follows. Potent inhibitor of the complement membrane attack complex (MAC) action, which protects human cells from damage during complement activation. Acts by binding to the beta-haipins of C8 (C8A and C8B) components of the assembling MAC, forming an intermolecular beta-sheet that prevents incorporation of the multiple copies of C9 required for complete formation of the osmolytic pore. The soluble form from urine retains its specific complement binding activity, but exhibits greatly reduced ability to inhibit complement membrane attack complex (MAC) assembly on cell membranes. In Homo sapiens (Human), this protein is CD59 glycoprotein.